The primary structure comprises 267 residues: Dihydropteroate synthase (267 aa).

Residues 1–251 (MTKTKIMGIL…NVELNAKLAK (251 aa)) form the Pterin-binding domain. N11 contacts Mg(2+). Residues T51, D84, N103, D167, K203, and 239–241 (RVH) contribute to the (7,8-dihydropterin-6-yl)methyl diphosphate site.

It belongs to the DHPS family. Homodimer. Mg(2+) is required as a cofactor.

The catalysed reaction is (7,8-dihydropterin-6-yl)methyl diphosphate + 4-aminobenzoate = 7,8-dihydropteroate + diphosphate. The protein operates within cofactor biosynthesis; tetrahydrofolate biosynthesis; 7,8-dihydrofolate from 2-amino-4-hydroxy-6-hydroxymethyl-7,8-dihydropteridine diphosphate and 4-aminobenzoate: step 1/2. Catalyzes the condensation of para-aminobenzoate (pABA) with 6-hydroxymethyl-7,8-dihydropterin diphosphate (DHPt-PP) to form 7,8-dihydropteroate (H2Pte), the immediate precursor of folate derivatives. The chain is Dihydropteroate synthase (folP) from Staphylococcus aureus (strain MRSA252).